A 36-amino-acid chain; its full sequence is Dermonecrotic toxin LgSicTox-beta-LOXN2 (36 aa).

It belongs to the arthropod phospholipase D family. Class II subfamily. The cofactor is Mg(2+). Post-translationally, contains 2 disulfide bonds. In terms of tissue distribution, expressed by the venom gland.

Its subcellular location is the secreted. The catalysed reaction is an N-(acyl)-sphingosylphosphocholine = an N-(acyl)-sphingosyl-1,3-cyclic phosphate + choline. It carries out the reaction an N-(acyl)-sphingosylphosphoethanolamine = an N-(acyl)-sphingosyl-1,3-cyclic phosphate + ethanolamine. The enzyme catalyses a 1-acyl-sn-glycero-3-phosphocholine = a 1-acyl-sn-glycero-2,3-cyclic phosphate + choline. It catalyses the reaction a 1-acyl-sn-glycero-3-phosphoethanolamine = a 1-acyl-sn-glycero-2,3-cyclic phosphate + ethanolamine. In terms of biological role, dermonecrotic toxins cleave the phosphodiester linkage between the phosphate and headgroup of certain phospholipids (sphingolipid and lysolipid substrates), forming an alcohol (often choline) and a cyclic phosphate. This toxin acts on sphingomyelin (SM). It may also act on ceramide phosphoethanolamine (CPE), lysophosphatidylcholine (LPC) and lysophosphatidylethanolamine (LPE), but not on lysophosphatidylserine (LPS), and lysophosphatidylglycerol (LPG). It acts by transphosphatidylation, releasing exclusively cyclic phosphate products as second products. Induces dermonecrosis, hemolysis, increased vascular permeability, edema, inflammatory response, and platelet aggregation. The protein is Dermonecrotic toxin LgSicTox-beta-LOXN2 of Loxosceles gaucho (Spider).